Consider the following 707-residue polypeptide: Serine/threonine protein kinase UL97 (707 aa).

The segment covering 1-14 has biased composition (low complexity); the sequence is MSSALRSRARSASL. Disordered regions lie at residues 1-32, 115-146, 176-199, and 231-264; these read MSSA…PSRA, EKED…GDGY, FTGG…PLRP, and ESQD…EADS. The span at 115–127 shows a compositional bias: basic and acidic residues; the sequence is EKEDAASDKENLR. A compositionally biased stretch (low complexity) spans 178–188; it reads GGSDPSDSVSG. Residues 337-345 and K359 each bind ATP; that span reads LGQGSFGEV. D456 functions as the Proton acceptor in the catalytic mechanism.

Belongs to the protein kinase superfamily. Tyr protein kinase family. HCMV ganciclovir subfamily. Interacts with UL83. Post-translationally, autophosphorylates on serine and threonine residues.

The protein resides in the virion. It carries out the reaction L-seryl-[protein] + ATP = O-phospho-L-seryl-[protein] + ADP + H(+). The catalysed reaction is L-threonyl-[protein] + ATP = O-phospho-L-threonyl-[protein] + ADP + H(+). In terms of biological role, serine/threonine protein kinase that plays important roles in several processes including nuclear viral egress, viral replication or regulation of host cell cycle progression. Participates in the acquisition of tegument during virion morphogenesis in the nucleus. Redistributes the host nuclear lamina by phosphorylating cellular Lamins-A/C. Plays a role in viral DNA synthesis by phosphorylating the DNA polymerase processivity factor UL44. Stimulates host cell cycle to support viral DNA synthesis by phosphorylating host retinoblastoma/RB1 protein. Additional substrates have been identified including host EF1D or H2B. Also phosphorylates host SAMHD1 and thereby counteracts its antiviral effect by reducing its dNTP hydrolase activity. The polypeptide is Serine/threonine protein kinase UL97 (UL97) (Human cytomegalovirus (strain Towne) (HHV-5)).